Consider the following 335-residue polypeptide: tRNA N6-adenosine threonylcarbamoyltransferase (335 aa).

H109, H113, and Y130 together coordinate a divalent metal cation. Substrate-binding positions include 130-134, D162, G177, E181, and N266; that span reads YVSGG. D294 lines the a divalent metal cation pocket.

This sequence belongs to the KAE1 / TsaD family. In terms of assembly, component of the EKC/KEOPS complex composed of at least GON7, TP53RK, TPRKB, OSGEP and LAGE3; the whole complex dimerizes. Interacts with PRAME. The cofactor is a divalent metal cation. As to expression, widely expressed at low level. Expressed in heart, placenta, liver, kidney, lung, brain, skeletal muscle and pancreas.

The protein localises to the cytoplasm. The protein resides in the nucleus. It carries out the reaction L-threonylcarbamoyladenylate + adenosine(37) in tRNA = N(6)-L-threonylcarbamoyladenosine(37) in tRNA + AMP + H(+). Its function is as follows. Component of the EKC/KEOPS complex that is required for the formation of a threonylcarbamoyl group on adenosine at position 37 (t(6)A37) in tRNAs that read codons beginning with adenine. The complex is probably involved in the transfer of the threonylcarbamoyl moiety of threonylcarbamoyl-AMP (TC-AMP) to the N6 group of A37. OSGEP likely plays a direct catalytic role in this reaction, but requires other protein(s) of the complex to fulfill this activity. The chain is tRNA N6-adenosine threonylcarbamoyltransferase from Homo sapiens (Human).